Consider the following 299-residue polypeptide: MIIPLISDLLALCKLKVVALILLTAEVGMFLAVPAPYLPNGLLVLSASIGISMAAASAAVFNHVVDEQIDAQMSRTNKRPLPQGKVSRNQALMWGVFLGLVGLGILQLFVNTITMVLTFVSLIGYAIIYTLYLKRATPQNIVIGGAAGAAPPVLGWTAVSGTQGIEYACLLFLIVFIWTPPHFWALAIHRVEEYKKVDVPMLPVTHGLAYTRTQILLYTVLLLLVSLLPYLASMSGLIYLVVAIALGIRFLMYAIKIYNNPDDKRIAWCTFVYSINYLMLLFVTLLFDHYWLILPLEVF.

The next 9 membrane-spanning stretches (helical) occupy residues 17 to 37 (VVAL…PAPY), 41 to 61 (GLLV…AAVF), 91 to 111 (ALMW…LFVN), 113 to 133 (ITMV…TLYL), 141 to 161 (IVIG…AVSG), 168 to 188 (ACLL…ALAI), 207 to 227 (GLAY…LVSL), 228 to 248 (LPYL…ALGI), and 266 to 286 (IAWC…VTLL).

This sequence belongs to the UbiA prenyltransferase family. Protoheme IX farnesyltransferase subfamily.

It is found in the cell inner membrane. It carries out the reaction heme b + (2E,6E)-farnesyl diphosphate + H2O = Fe(II)-heme o + diphosphate. The protein operates within porphyrin-containing compound metabolism; heme O biosynthesis; heme O from protoheme: step 1/1. In terms of biological role, converts heme B (protoheme IX) to heme O by substitution of the vinyl group on carbon 2 of heme B porphyrin ring with a hydroxyethyl farnesyl side group. The chain is Protoheme IX farnesyltransferase from Ruthia magnifica subsp. Calyptogena magnifica.